The sequence spans 269 residues: Ribosomal RNA small subunit methyltransferase J (269 aa).

S-adenosyl-L-methionine contacts are provided by residues 124–125 (ER) and Asp188.

It belongs to the methyltransferase superfamily. RsmJ family.

It is found in the cytoplasm. It carries out the reaction guanosine(1516) in 16S rRNA + S-adenosyl-L-methionine = N(2)-methylguanosine(1516) in 16S rRNA + S-adenosyl-L-homocysteine + H(+). Functionally, specifically methylates the guanosine in position 1516 of 16S rRNA. This is Ribosomal RNA small subunit methyltransferase J from Saccharophagus degradans (strain 2-40 / ATCC 43961 / DSM 17024).